Reading from the N-terminus, the 38-residue chain is Phospholipase A2 1 (38 aa).

Positions 28, 30, and 32 each coordinate Ca(2+).

It belongs to the phospholipase A2 family. Group I subfamily. The cofactor is Ca(2+). As to expression, expressed by the venom gland.

The protein localises to the secreted. It carries out the reaction a 1,2-diacyl-sn-glycero-3-phosphocholine + H2O = a 1-acyl-sn-glycero-3-phosphocholine + a fatty acid + H(+). In terms of biological role, snake venom phospholipase A2 (PLA2) that inhibits neuromuscular transmission by blocking acetylcholine release from the nerve termini. PLA2 catalyzes the calcium-dependent hydrolysis of the 2-acyl groups in 3-sn-phosphoglycerides. The sequence is that of Phospholipase A2 1 from Calliophis bivirgatus (Blue Malaysian coral snake).